A 261-amino-acid chain; its full sequence is Large ribosomal subunit protein uL2 (261 aa).

The segment at 207-233 (VEHPHGGGNHQHIGKASTVKRGTPPGR) is disordered.

It belongs to the universal ribosomal protein uL2 family.

The protein resides in the cytoplasm. In Aedes albopictus (Asian tiger mosquito), this protein is Large ribosomal subunit protein uL2 (RpL8).